The sequence spans 55 residues: MAKGAREKIKLVSTANTGHFYTTDKNKRNMPGKMEIKKFDPVVRQHVLYKEAKIK.

It belongs to the bacterial ribosomal protein bL33 family.

In Aliivibrio salmonicida (strain LFI1238) (Vibrio salmonicida (strain LFI1238)), this protein is Large ribosomal subunit protein bL33.